Here is a 341-residue protein sequence, read N- to C-terminus: 2-dehydro-3-deoxy-L-galactonate 5-dehydrogenase (341 aa).

A Zn(2+)-binding site is contributed by C37. Active-site charge relay system residues include T39 and H42. Positions 60, 61, 90, 93, 96, and 104 each coordinate Zn(2+).

The protein belongs to the zinc-containing alcohol dehydrogenase family. It depends on Zn(2+) as a cofactor.

It carries out the reaction 2-dehydro-3-deoxy-L-galactonate + NAD(+) = 3-deoxy-D-glycero-2,5-hexodiulosonate + NADH + H(+). Functionally, involved in the degradation of 3,6-anhydro-L-galactose, which is the major monomeric sugar of red macroalgae. Catalyzes the third step of the pathway, the NAD(+)-dependent oxidation of 2-dehydro-3-deoxy-L-galactonate (L-KDGal) to 3-deoxy-D-glycero-2,5-hexodiulosonate (L-DDGal). This Pseudoalteromonas atlantica (strain T6c / ATCC BAA-1087) protein is 2-dehydro-3-deoxy-L-galactonate 5-dehydrogenase.